We begin with the raw amino-acid sequence, 1143 residues long: Serine/threonine-protein kinase BRI1-like 2 (1143 aa).

The signal sequence occupies residues 1–31 (MTTSPIRVRIRTRIQISFIFLLTHLSQSSSS). The Extracellular segment spans residues 32 to 756 (DQSSLKTDSL…GTRAASWANS (725 aa)). Residues 68–75 (CQFSGVTC) carry the Cys pair 1 motif. 24 LRR repeats span residues 77–101 (GGRV…AFTS), 102–125 (LDSL…LLLL), 126–150 (PLTL…FFSK), 151–175 (YSNL…LFLS), 177–200 (KKLQ…TIPL), 203–227 (CVSM…LINC), 228–250 (TNLK…SFGE), 251–275 (LKLL…IGDT), 277–299 (RSLQ…SLSS), 300–324 (CSWL…ILRS), 326–349 (GSLQ…ISAC), 351–373 (SLRI…LCPG), 374–398 (AASL…ISQC), 399–422 (SELR…IGNL), 424–446 (KLEQ…IGKL), 447–470 (QNLK…FFNC), 472–493 (NIEW…DFGI), 494–518 (LSRL…LGKC), 520–542 (TLVW…LGRQ), 570–594 (VGGL…KSCD), 610–634 (YQTI…IGEM), 635–660 (IALQ…QLKN), 662–681 (GVFD…SFSN), and 682–707 (LSFL…QLST). Asparagine 84 and asparagine 118 each carry an N-linked (GlcNAc...) asparagine glycan. N-linked (GlcNAc...) asparagine glycosylation is found at asparagine 163, asparagine 188, asparagine 226, and asparagine 234. 2 N-linked (GlcNAc...) asparagine glycosylation sites follow: asparagine 288 and asparagine 312. Asparagine 412 carries an N-linked (GlcNAc...) asparagine glycan. The N-linked (GlcNAc...) asparagine glycan is linked to asparagine 469. Asparagine 506 carries N-linked (GlcNAc...) asparagine glycosylation. An N-linked (GlcNAc...) asparagine glycan is attached at asparagine 681. A Cys pair 2 motif is present at residues 720 to 727 (CGVPLPEC). Residues 757 to 777 (IVLGVLISAASVCILIVWAIA) form a helical membrane-spanning segment. Topologically, residues 778–1143 (VRARRRDADD…NNSHSHSNSL (366 aa)) are cytoplasmic. Threonine 835 carries the phosphothreonine modification. One can recognise a Protein kinase domain in the interval 838–1129 (FSAASMIGHG…LQVVASLREL (292 aa)). ATP is bound by residues 844–852 (IGHGGFGEV) and lysine 866. Residue tyrosine 911 is modified to Phosphotyrosine. Aspartate 966 acts as the Proton acceptor in catalysis. Serine 1001 carries the phosphoserine modification. At tyrosine 1009 the chain carries Phosphotyrosine.

This sequence belongs to the protein kinase superfamily. Ser/Thr protein kinase family. In terms of assembly, interacts with TTL3. In terms of tissue distribution, expressed in provascular and procambial sites throughout plant development. Expressed throughout globe- to heart-staged embryos. Then, it is restricted to procambial cells by the late torpedo stage, and this pattern persists throughout the duration of embryo development. After germination, it is expressed not only in procambial cells throughout the plant but also in all lateral organ primordia before the onset of vascularization.

It is found in the cell membrane. It carries out the reaction L-seryl-[protein] + ATP = O-phospho-L-seryl-[protein] + ADP + H(+). The catalysed reaction is L-threonyl-[protein] + ATP = O-phospho-L-threonyl-[protein] + ADP + H(+). Its function is as follows. Receptor with a serine/threonine-protein kinase activity, which may transduce extracellular spatial and temporal signals into downstream cell differentiation responses in provascular and procambial cells. In contrast to BRI1, BRL1 and BRL3, it does not bind brassinolide. This is Serine/threonine-protein kinase BRI1-like 2 from Arabidopsis thaliana (Mouse-ear cress).